A 263-amino-acid polypeptide reads, in one-letter code: Antigen 10-3 (263 aa).

The signal sequence occupies residues 1-21 (MNIYLIGILCIVGLIISQGST). The disordered stretch occupies residues 70–207 (GNKKDKQPTQ…QINDGTSDKP (138 aa)). Residues 78–90 (TQKTTPKPTTPKQ) are compositionally biased toward low complexity. A run of 5 repeats spans residues 81 to 107 (TTPK…TIKR), 108 to 134 (TTPK…TIKR), 135 to 161 (TTPK…TIKR), 162 to 188 (TTPK…TIKR), and 189 to 206 (TTPK…TSDK). Residues 81–189 (TTPKPTTPKQ…TSDTHTIKRT (109 aa)) are 5 X 27 AA tandem repeats. Composition is skewed to basic and acidic residues over residues 95–104 (TSDKTSDTHT), 122–131 (TSDKTSDTHT), 149–158 (TSDKTSDTHT), and 176–185 (TSDKTSDTHT).

This Schistosoma mansoni (Blood fluke) protein is Antigen 10-3.